A 317-amino-acid polypeptide reads, in one-letter code: MEIDNQTWVREFILLGLSSDWCTQISLFSLFLVTYLMTVLGNCLIVLLIRLDSRLHTPMYFFLTNLSLVDVSYATSVVPQLLAHFLAEHKAIPFQSCAAQLFFSLALGGIEFVLLAVMAYDRHVAVSDRLRYSAIMHGGLCARLAITSWVSGSINSLVQTAITFQLPMCTNKFIDHISCELLAVVRLACVDTSSNEAAIMVSSIVLLMTPFCLVLLSYIRIISTILKIQSREGRKKAFHTCASHLTVVALCYGTTIFTYIQPHSGPSVLQEKLISVFYAIVMPLLNPVIYSLRNKEVKGAWHKLLEKFSGLTSKLGT.

Residues 1–25 (MEIDNQTWVREFILLGLSSDWCTQI) lie on the Extracellular side of the membrane. Asparagine 5 carries N-linked (GlcNAc...) asparagine glycosylation. A helical membrane pass occupies residues 26–49 (SLFSLFLVTYLMTVLGNCLIVLLI). The Cytoplasmic portion of the chain corresponds to 50–57 (RLDSRLHT). A helical membrane pass occupies residues 58–79 (PMYFFLTNLSLVDVSYATSVVP). The Extracellular segment spans residues 80–100 (QLLAHFLAEHKAIPFQSCAAQ). Cysteine 97 and cysteine 189 are disulfide-bonded. Residues 101-120 (LFFSLALGGIEFVLLAVMAY) traverse the membrane as a helical segment. Topologically, residues 121-139 (DRHVAVSDRLRYSAIMHGG) are cytoplasmic. A helical membrane pass occupies residues 140 to 158 (LCARLAITSWVSGSINSLV). Residues 159–195 (QTAITFQLPMCTNKFIDHISCELLAVVRLACVDTSSN) are Extracellular-facing. A helical membrane pass occupies residues 196–219 (EAAIMVSSIVLLMTPFCLVLLSYI). Residues 220–236 (RIISTILKIQSREGRKK) lie on the Cytoplasmic side of the membrane. The chain crosses the membrane as a helical span at residues 237–259 (AFHTCASHLTVVALCYGTTIFTY). At 260-272 (IQPHSGPSVLQEK) the chain is on the extracellular side. A helical membrane pass occupies residues 273–292 (LISVFYAIVMPLLNPVIYSL). Residues 293-317 (RNKEVKGAWHKLLEKFSGLTSKLGT) are Cytoplasmic-facing.

This sequence belongs to the G-protein coupled receptor 1 family.

It is found in the cell membrane. Odorant receptor. The polypeptide is Olfactory receptor 2F2 (OR2F2) (Homo sapiens (Human)).